The chain runs to 529 residues: Bifunctional purine biosynthesis protein PurH (529 aa).

The 148-residue stretch at 1–148 folds into the MGS-like domain; it reads MNNARPIRRA…KNHKDVVIVV (148 aa).

The protein belongs to the PurH family.

The catalysed reaction is (6R)-10-formyltetrahydrofolate + 5-amino-1-(5-phospho-beta-D-ribosyl)imidazole-4-carboxamide = 5-formamido-1-(5-phospho-D-ribosyl)imidazole-4-carboxamide + (6S)-5,6,7,8-tetrahydrofolate. It carries out the reaction IMP + H2O = 5-formamido-1-(5-phospho-D-ribosyl)imidazole-4-carboxamide. Its pathway is purine metabolism; IMP biosynthesis via de novo pathway; 5-formamido-1-(5-phospho-D-ribosyl)imidazole-4-carboxamide from 5-amino-1-(5-phospho-D-ribosyl)imidazole-4-carboxamide (10-formyl THF route): step 1/1. The protein operates within purine metabolism; IMP biosynthesis via de novo pathway; IMP from 5-formamido-1-(5-phospho-D-ribosyl)imidazole-4-carboxamide: step 1/1. This Shewanella amazonensis (strain ATCC BAA-1098 / SB2B) protein is Bifunctional purine biosynthesis protein PurH.